A 137-amino-acid chain; its full sequence is Small ribosomal subunit protein uS9 (137 aa).

Residues 105 to 137 (LKTEGYLKRDPRAVERKKYGLRKARKAPQYSKR) are disordered. Residues 109–122 (GYLKRDPRAVERKK) show a composition bias toward basic and acidic residues. Basic residues predominate over residues 123–137 (YGLRKARKAPQYSKR).

Belongs to the universal ribosomal protein uS9 family.

This is Small ribosomal subunit protein uS9 from Synechococcus sp. (strain JA-3-3Ab) (Cyanobacteria bacterium Yellowstone A-Prime).